A 506-amino-acid chain; its full sequence is MDLLLLEKTLIGLFLAAVVAIAVSTLRGRKFKLPPGPLPVPIFGNWLQVGDDLNHRNLTDLAKKFGDIFLLRMGQRNLVVVSSPELAKEVLHTQGVEFGSRTRNVVFDIFTGKGQDMVFTVYGEHWRKMRRIMTVPFFTNKVVQQYRHGWESEAAAVVEDVKKNPDAAVSGTVIRRRLQLMMYNNMYRIMFDRRFESEEDPIFQRLRALNGERSRLAQSFEYNYGDFIPILRPFLKGYLKICKEVKETRLKLFKDYFVDERKKLGSTKSTNNNNELKCAIDHILDAQRKGEINEDNVLYIVENINVAAIETTLWSIEWGIAELVNHPEIQQKLRDEIDRVLGAGHQVTEPDIQKLPYLQAVVKETLRLRMAIPLLVPHMNLHDAKLGGYDIPAESKILVNAWWLANNPAHWKKPEEFRPERFFEEESLVEANGNDFRYLPFGVGRRSCPGIILALPILGITLGRLVQNFELLPPPGQSQIDTSEKGGQFSLHILKHSTIVAKPRSF.

Residues 3–23 (LLLLEKTLIGLFLAAVVAIAV) form a helical membrane-spanning segment. Residues 213 to 218 (RSRLAQ) and alanine 307 each bind (E)-cinnamate. Position 448 (cysteine 448) interacts with heme.

Belongs to the cytochrome P450 family. It depends on heme as a cofactor.

The protein localises to the membrane. It catalyses the reaction (E)-cinnamate + reduced [NADPH--hemoprotein reductase] + O2 = (E)-4-coumarate + oxidized [NADPH--hemoprotein reductase] + H2O + H(+). The protein operates within phenylpropanoid metabolism; trans-4-coumarate biosynthesis; trans-4-coumarate from trans-cinnamate: step 1/1. Its function is as follows. Catalyzes the first oxidative step of the phenylpropanoid pathway in higher plants by transforming trans-cinnamate into p-coumarate. The compounds formed by this pathway are essential components for lignification, pollination, and defense against ultraviolet light, predators and pathogens. In Glycine max (Soybean), this protein is Trans-cinnamate 4-monooxygenase (CYP73A11).